A 476-amino-acid chain; its full sequence is Proline--tRNA ligase 2 (476 aa).

Belongs to the class-II aminoacyl-tRNA synthetase family. ProS type 3 subfamily. Homodimer.

It is found in the cytoplasm. The catalysed reaction is tRNA(Pro) + L-proline + ATP = L-prolyl-tRNA(Pro) + AMP + diphosphate. In terms of biological role, catalyzes the attachment of proline to tRNA(Pro) in a two-step reaction: proline is first activated by ATP to form Pro-AMP and then transferred to the acceptor end of tRNA(Pro). The polypeptide is Proline--tRNA ligase 2 (Bacillus cereus (strain ATCC 10987 / NRS 248)).